Here is a 409-residue protein sequence, read N- to C-terminus: Arginine biosynthesis bifunctional protein ArgJ (409 aa).

Residues Thr-156, Lys-182, Thr-193, Glu-280, Asn-404, and Ser-409 each contribute to the substrate site. The active-site Nucleophile is Thr-193.

Belongs to the ArgJ family. In terms of assembly, heterotetramer of two alpha and two beta chains.

Its subcellular location is the cytoplasm. It carries out the reaction N(2)-acetyl-L-ornithine + L-glutamate = N-acetyl-L-glutamate + L-ornithine. It catalyses the reaction L-glutamate + acetyl-CoA = N-acetyl-L-glutamate + CoA + H(+). It participates in amino-acid biosynthesis; L-arginine biosynthesis; L-ornithine and N-acetyl-L-glutamate from L-glutamate and N(2)-acetyl-L-ornithine (cyclic): step 1/1. The protein operates within amino-acid biosynthesis; L-arginine biosynthesis; N(2)-acetyl-L-ornithine from L-glutamate: step 1/4. Functionally, catalyzes two activities which are involved in the cyclic version of arginine biosynthesis: the synthesis of N-acetylglutamate from glutamate and acetyl-CoA as the acetyl donor, and of ornithine by transacetylation between N(2)-acetylornithine and glutamate. The protein is Arginine biosynthesis bifunctional protein ArgJ of Nitrosomonas europaea (strain ATCC 19718 / CIP 103999 / KCTC 2705 / NBRC 14298).